We begin with the raw amino-acid sequence, 343 residues long: Fiber protein (343 aa).

The protein belongs to the adenoviridae fiber family. Homotrimer. Interacts with host receptor CD46. Interacts (via N-terminal tail region) with pentons.

It is found in the virion. It localises to the host nucleus. Forms spikes that protrude from each vertex of the icosahedral capsid. Interacts with host receptor CD46 to provide virion initial attachment to target cell. Fiber proteins are shed during virus entry, when virus is still at the cell surface. The polypeptide is Fiber protein (Homo sapiens (Human)).